Reading from the N-terminus, the 2293-residue chain is G-protein coupled receptor 179 (2293 aa).

The N-terminal stretch at 1–27 (MGARAVVISSLAWGLLSCCFLCSGALG) is a signal peptide. The segment at 62 to 245 (FLYSGDVQRL…CHEGQLRPGW (184 aa)) is cache-like region. Asparagine 75 is a glycosylation site (N-linked (GlcNAc...) asparagine). Cysteine 76 and cysteine 236 are joined by a disulfide. Asparagine 298 is a glycosylation site (N-linked (GlcNAc...) asparagine). The next 7 membrane-spanning stretches (helical) occupy residues 383 to 403 (AVLA…LVAY), 416 to 436 (IVLL…VFIL), 445 to 465 (CVAL…TIIL), 494 to 514 (LGQL…GALE), 544 to 564 (YIMV…CYAT), 585 to 602 (LLLS…VPSL), and 608 to 628 (LLLF…LIFI). A disulfide bridge links cysteine 445 with cysteine 537. Asparagine 661 is a glycosylation site (N-linked (GlcNAc...) asparagine). A disordered region spans residues 733–812 (QHSRDSGSLG…GRESLADGPP (80 aa)). The span at 738–759 (SGSLGLGSLPGSSRRRLLSSSL) shows a compositional bias: low complexity. The span at 773–782 (STYDHHREHN) shows a compositional bias: basic and acidic residues. The N-linked (GlcNAc...) asparagine glycan is linked to asparagine 823. Disordered regions lie at residues 872–935 (EERK…HPPI), 1046–1235 (GTGE…NPAL), 1275–1294 (ERTE…LSRS), 1326–1345 (EAVC…QLVH), 1388–1411 (GTST…ATFW), 1479–1560 (ELAG…HGGS), 1578–1770 (ATLS…VCPW), 1792–1828 (TVGK…TSKG), 1844–1882 (WKPP…KGEL), 1924–2051 (SSSH…GSEK), and 2212–2293 (FLPE…WDCE). The segment covering 1080–1089 (LKTPLQQGSV) has biased composition (polar residues). 3 stretches are compositionally biased toward basic and acidic residues: residues 1105 to 1123 (TYKE…KGKP), 1173 to 1186 (CQKE…DRNK), and 1275 to 1286 (ERTEGGSLEKKP). Basic and acidic residues-rich tracts occupy residues 1546 to 1555 (ASSKAGEKLL) and 1597 to 1632 (RTSE…RIQK). Positions 1644–1663 (PGSTPQRDTEKAQASLQRQG) are enriched in polar residues. Composition is skewed to basic and acidic residues over residues 1682–1698 (GEER…RPND) and 1717–1728 (KKSERLGSEKEV). Residues 1737 to 1747 (PGDSSQQPDTP) show a composition bias toward polar residues. 3 stretches are compositionally biased toward basic and acidic residues: residues 1748–1761 (NTEK…EHGS), 1796–1813 (GLER…RQNL), and 1872–1882 (ASDRASEKGEL). A compositionally biased stretch (polar residues) spans 1937–1948 (RVSSQPLVSTGD). A compositionally biased stretch (basic and acidic residues) spans 1979–2007 (TETEMSRQDEKEKSQEEKERAPETRDHEG). A compositionally biased stretch (pro residues) spans 2283–2293 (SPPPDYPWDCE).

It belongs to the G-protein coupled receptor 3 family. Homodimer. Associates with the R7 group RGS-GNB5 complexes, composed of an R7 group RGS subunit (RGS6, RGS7, RGS9 or RGS11) and GNB5, promoting their localization to the cell membrane and regulating the GTPase activator activity of R7 RGS proteins. Interacts with TRPM1. Interacts with GRM6. Interacts with EGFLAM; transsynaptic interaction is required for synaptic organization of photoreceptor cells.

The protein localises to the cell membrane. It is found in the postsynaptic cell membrane. It localises to the cell projection. The protein resides in the dendrite. Its function is as follows. Orphan receptor involved in vision. Required for signal transduction through retinal depolarizing bipolar cells. Acts as an atypical G-protein coupled receptor that recruits and regulates the R7 group RGS-GNB5 complexes instead of activating G proteins: promotes the GTPase activator activity of R7 RGS proteins, increasing the GTPase activity of G protein alpha subunits, thereby driving them into their inactive GDP-bound form. Associates with components of metabotropic signaling cascade in retina ON-bipolar neurons, such as TRPM1 and GRM6: may control the ability of the GRM6 cascade to gate TRPM1. This is G-protein coupled receptor 179 from Mus musculus (Mouse).